The primary structure comprises 188 residues: Phosphatidylcholine-sterol acyltransferase (188 aa).

Asn20 is a glycosylation site (N-linked (GlcNAc...) asparagine). The active-site Charge relay system is the His169.

This sequence belongs to the AB hydrolase superfamily. Lipase family. Detected in blood plasma (at protein level).

It is found in the secreted. The enzyme catalyses a sterol + a 1,2-diacyl-sn-glycero-3-phosphocholine = a sterol ester + a 1-acyl-sn-glycero-3-phosphocholine. It catalyses the reaction a 1-O-alkyl-2-acetyl-sn-glycero-3-phosphocholine + H2O = a 1-O-alkyl-sn-glycero-3-phosphocholine + acetate + H(+). The catalysed reaction is a 1-hexadecanoyl-2-acyl-sn-glycero-3-phosphocholine + (24S)-hydroxycholesterol = (24S)-24-hydroxycholesterol ester + 1-hexadecanoyl-sn-glycero-3-phosphocholine. It carries out the reaction (24S)-hydroxycholesterol + 1-hexadecanoyl-2-(9Z,12Z-octadecadienoyl)-sn-glycero-3-phosphocholine = (24S)-hydroxycholesterol 3-linoleoate + 1-hexadecanoyl-sn-glycero-3-phosphocholine. The enzyme catalyses 1-hexadecanoyl-2-(5Z,8Z,11Z,14Z-eicosatetraenoyl)-sn-glycero-3-phosphocholine + cholesterol = cholesteryl (5Z,8Z,11Z,14Z)-eicosatetraenoate + 1-hexadecanoyl-sn-glycero-3-phosphocholine. It catalyses the reaction 1-hexadecanoyl-2-(9Z-octadecenoyl)-sn-glycero-3-phosphocholine + cholesterol = cholesteryl (9Z-octadecenoate) + 1-hexadecanoyl-sn-glycero-3-phosphocholine. The catalysed reaction is 1-hexadecanoyl-2-(8Z,11Z,14Z-eicosatrienoyl)-sn-glycero-3-phosphocholine + cholesterol = cholesteryl (8Z,11Z,14Z)-eicosatrienoate + 1-hexadecanoyl-sn-glycero-3-phosphocholine. It carries out the reaction 1-hexadecanoyl-2-(5Z,8Z,11Z-eicosatrienoyl)-sn-glycero-3-phosphocholine + cholesterol = cholesteryl (5Z,8Z,11Z)-eicosatrienoate + 1-hexadecanoyl-sn-glycero-3-phosphocholine. The enzyme catalyses 1-hexadecanoyl-2-(5Z,8Z,11Z,14Z,17Z-eicosapentaenoyl)-sn-glycero-3-phosphocholine + cholesterol = (5Z,8Z,11Z,14Z,17Z-eicosapentaenoyl)-cholesterol + 1-hexadecanoyl-sn-glycero-3-phosphocholine. It catalyses the reaction 1-hexadecanoyl-2-(9Z,12Z-octadecadienoyl)-sn-glycero-3-phosphocholine + cholesterol = cholesteryl (9Z,12Z)-octadecadienoate + 1-hexadecanoyl-sn-glycero-3-phosphocholine. The catalysed reaction is 1-hexadecanoyl-2-(6Z,9Z,12Z-octadecatrienoyl)-sn-glycero-3-phosphocholine + cholesterol = (6Z,9Z,12Z-octadecatrienoyl)-cholesterol + 1-hexadecanoyl-sn-glycero-3-phosphocholine. It carries out the reaction 1-hexadecanoyl-2-(11Z,14Z,17Z-eicosatrienoyl)-sn-glycero-3-phosphocholine + cholesterol = (11Z,14Z,17Z-eicosatrienoyl)-cholesterol + 1-hexadecanoyl-sn-glycero-3-phosphocholine. The enzyme catalyses 1-hexadecanoyl-2-(9Z,12Z,15Z-octadecatrienoyl)-sn-glycero-3-phosphocholine + cholesterol = (9Z,12Z,15Z-octadecatrienoyl)-cholesterol + 1-hexadecanoyl-sn-glycero-3-phosphocholine. It catalyses the reaction 1-hexadecanoyl-2-(9Z,12Z-octadecadienoyl)-sn-glycero-3-phosphocholine + H2O = (9Z,12Z)-octadecadienoate + 1-hexadecanoyl-sn-glycero-3-phosphocholine + H(+). The catalysed reaction is 1-hexadecanoyl-2-(5Z,8Z,11Z,14Z-eicosatetraenoyl)-sn-glycero-3-phosphocholine + H2O = 1-hexadecanoyl-sn-glycero-3-phosphocholine + (5Z,8Z,11Z,14Z)-eicosatetraenoate + H(+). It carries out the reaction a 1-O-alkyl-2-acetyl-sn-glycero-3-phosphocholine + 1-hexadecanoyl-sn-glycero-3-phosphocholine = 1-hexadecanoyl-2-acetyl-sn-glycero-3-phosphocholine + a 1-O-alkyl-sn-glycero-3-phosphocholine. In terms of biological role, central enzyme in the extracellular metabolism of plasma lipoproteins. Synthesized mainly in the liver and secreted into plasma where it converts cholesterol and phosphatidylcholines (lecithins) to cholesteryl esters and lysophosphatidylcholines on the surface of high and low density lipoproteins (HDLs and LDLs). The cholesterol ester is then transported back to the liver. Also produced in the brain by primary astrocytes, and esterifies free cholesterol on nascent APOE-containing lipoproteins secreted from glia and influences cerebral spinal fluid (CSF) APOE- and APOA1 levels. Together with APOE and the cholesterol transporter ABCA1, plays a key role in the maturation of glial-derived, nascent lipoproteins. Required for remodeling high-density lipoprotein particles into their spherical forms. Has a preference for plasma 16:0-18:2 or 18:O-18:2 phosphatidylcholines. Catalyzes the hydrolysis of 1-O-alkyl-2-acetyl-sn-glycero-3-phosphocholine (platelet-activating factor or PAF) to 1-O-alkyl-sn-glycero-3-phosphocholine (lyso-PAF). Also catalyzes the transfer of the acetate group from PAF to 1-hexadecanoyl-sn-glycero-3-phosphocholine forming lyso-PAF. Catalyzes the esterification of (24S)-hydroxycholesterol (24(S)OH-C), also known as cerebrosterol to produce 24(S)OH-C monoesters. The protein is Phosphatidylcholine-sterol acyltransferase (LCAT) of Sus scrofa (Pig).